We begin with the raw amino-acid sequence, 846 residues long: Neurotactin (846 aa).

The tract at residues 1–222 is disordered; sequence MGELEEKETP…EDASDAPPKR (222 aa). Residues 1–324 are Cytoplasmic-facing; it reads MGELEEKETP…LRGYKCSVDD (324 aa). A compositionally biased stretch (low complexity) spans 11–20; sequence PTETTAAQQE. Residues 23-42 are compositionally biased toward basic and acidic residues; sequence EEPKETDKMLDKKEDAKEKT. T28 is modified (phosphothreonine; by PKC). At T42 the chain carries Phosphothreonine. S44 is modified (phosphoserine). Phosphothreonine is present on T47. Residues S48 and S52 each carry the phosphoserine modification. Positions 63–74 are enriched in basic and acidic residues; the sequence is AEKKIDDAELAK. S75 is modified (phosphoserine; by PKC). Position 77 is a phosphoserine (S77). Composition is skewed to basic and acidic residues over residues 95–111, 141–155, 163–178, and 185–205; these read DSAD…EVKP, LLEK…KEAN, GKDE…ERLR, and PSAE…KSEA. S103 carries the post-translational modification Phosphoserine; by PKC. A Phosphoserine; by PKC modification is found at S169. 2 positions are modified to phosphoserine: S186 and S203. Phosphothreonine is present on T206. S256 is modified (phosphoserine). T259 is modified (phosphothreonine). S263 carries the phosphoserine modification. T269 carries the post-translational modification Phosphothreonine. The chain crosses the membrane as a helical; Signal-anchor for type II membrane protein span at residues 325–346; it reads ALIVFGILLFVLLLGVIGYVLT. Over 347–846 the chain is Extracellular; sequence HETLTSPPLR…DIVPRYARVD (500 aa). N-linked (GlcNAc...) asparagine glycosylation is found at N410, N417, and N428. Cystine bridges form between C422/C437 and C600/C605. N636, N691, and N720 each carry an N-linked (GlcNAc...) asparagine glycan. C738 and C830 are joined by a disulfide.

This sequence in the C-terminal section; belongs to the type-B carboxylesterase/lipase family. As to expression, late in embryogenesis, expression is restricted to cells of the peripheral and central nervous system undergoing proliferation and differentiation. Also expressed in larval CNS, mesoderm and imaginal disks.

The protein localises to the membrane. Functionally, may mediate or modulate cell adhesion between embryonic cells during development. This is Neurotactin (Nrt) from Drosophila melanogaster (Fruit fly).